A 420-amino-acid chain; its full sequence is Vacuolar amino acid transporter 5 (420 aa).

Topologically, residues 1-19 are cytoplasmic; it reads MSGYSPLSSGPADVHIGKA. The helical transmembrane segment at 20–40 threads the bilayer; sequence GFFSSVINLANTILGAGILSL. Over 41 to 49 the chain is Vacuolar; that stretch reads PNAFTKTGL. A helical transmembrane segment spans residues 50–70; the sequence is LFGCLTIVFSAFASFLGLYFV. Residues 71-96 are Cytoplasmic-facing; that stretch reads SQCAARLPRGKASFAAVAKHTFPSLA. Residues 97–117 form a helical membrane-spanning segment; sequence VVFDASIAVKCFGVAVSYLVI. Over 118-141 the chain is Vacuolar; sequence VGDLMPQIAPSLGLSSPMFLRRQT. A helical membrane pass occupies residues 142–162; the sequence is WIVFALFVLTPLSFLKRLDSL. Topologically, residues 163–166 are cytoplasmic; the sequence is RHTS. The chain crosses the membrane as a helical span at residues 167 to 187; it reads VISLIALCYLVFIVLYHFIIG. The Vacuolar segment spans residues 188 to 195; that stretch reads DTVKGEIR. A helical transmembrane segment spans residues 196-216; it reads YFVPESGFGYLSVLPVFVFGF. Residues 217 to 240 are Cytoplasmic-facing; sequence TCHQNAFSVINEVRNFSQGFVNFT. A helical transmembrane segment spans residues 241–261; that stretch reads MFTAIISSTLLYLLVAITGYL. Over 262 to 278 the chain is Vacuolar; sequence SFGSLASGNIIAMYDNT. Residues 279 to 299 traverse the membrane as a helical segment; the sequence is SIWIIGGKLAIVVLVLFSYPL. The Cytoplasmic segment spans residues 300–326; it reads QCHPCRNSVYQAIRRSYSAHDMSDGYH. Residues 327 to 347 traverse the membrane as a helical segment; the sequence is AVITLCILLFTHSLALLLSSL. The Vacuolar segment spans residues 348-349; that stretch reads EM. The chain crosses the membrane as a helical span at residues 350–370; it reads VLAFVGSTGSTFISFILPGSL. Residues 371 to 394 lie on the Cytoplasmic side of the membrane; it reads YYFFSHKVASPGNSSPLQLRISRA. The helical transmembrane segment at 395-415 threads the bilayer; it reads FAAGLAIYGTVVMILCLNINI. Topologically, residues 416 to 420 are vacuolar; that stretch reads AKLSH.

This sequence belongs to the amino acid/polyamine transporter 2 family.

Its subcellular location is the vacuole membrane. Its function is as follows. Vacuolar amino acid transporter involved in the vacuolar uptake of histidine, glutamate, tyrosine, arginine, lysine, and serine. Required for sporulation. The chain is Vacuolar amino acid transporter 5 (avt5) from Schizosaccharomyces pombe (strain 972 / ATCC 24843) (Fission yeast).